Consider the following 140-residue polypeptide: Nucleoside diphosphate kinase (140 aa).

Residues Lys11, Phe59, Arg87, Thr93, Arg104, and Asn114 each coordinate ATP. His117 serves as the catalytic Pros-phosphohistidine intermediate.

It belongs to the NDK family. In terms of assembly, homotetramer. The cofactor is Mg(2+).

The protein resides in the cytoplasm. It carries out the reaction a 2'-deoxyribonucleoside 5'-diphosphate + ATP = a 2'-deoxyribonucleoside 5'-triphosphate + ADP. The enzyme catalyses a ribonucleoside 5'-diphosphate + ATP = a ribonucleoside 5'-triphosphate + ADP. Its function is as follows. Major role in the synthesis of nucleoside triphosphates other than ATP. The ATP gamma phosphate is transferred to the NDP beta phosphate via a ping-pong mechanism, using a phosphorylated active-site intermediate. The sequence is that of Nucleoside diphosphate kinase from Ruegeria sp. (strain TM1040) (Silicibacter sp.).